The primary structure comprises 201 residues: uncharacterized protein (201 aa).

Residues 1-22 are disordered; it reads MAASKAAKSSEDRAGGGGGGGG.

This is an uncharacterized protein from Tomato ringspot virus (isolate raspberry) (ToRSV).